A 161-amino-acid chain; its full sequence is MKNILRLTLNGRAREDLVPDNMLLLDYLRETVGLTGTKQGCDGGECGACTVLVDDRPRLACSTLAHQVAGKKVETVESLATQGTLSKLQAAFHEKLGTQCGFCTPGMIMASEALLRKNPSPSRDEIKAALAGNLCRCTGYVRSSKSVETAAAARLCEEGAR.

Residues 3-79 form the 2Fe-2S ferredoxin-type domain; the sequence is NILRLTLNGR…GKKVETVESL (77 aa). Cys-41, Cys-46, Cys-49, Cys-61, Cys-100, Cys-103, Cys-135, and Cys-137 together coordinate [2Fe-2S] cluster.

Heterohexamer of two alpha, two beta and two gamma subunits. The cofactor is [2Fe-2S] cluster.

The catalysed reaction is oxidized 2[4Fe-4S]-[ferredoxin] + benzoyl-CoA + H2O = 4-hydroxybenzoyl-CoA + reduced 2[4Fe-4S]-[ferredoxin] + 2 H(+). Inactivated by low concentrations of cyanide in vitro. Its function is as follows. Component of a complex that catalyzes the reductive dehydroxylation of 4-hydroxybenzoyl-CoA to benzoyl-CoA. Reaction is not reversible. Is a key enzyme in the anaerobic degradation of phenolic compounds. The sequence is that of 4-hydroxybenzoyl-CoA reductase subunit gamma (hcrC) from Thauera aromatica.